A 121-amino-acid polypeptide reads, in one-letter code: Large ribosomal subunit protein bL12 (121 aa).

It belongs to the bacterial ribosomal protein bL12 family. In terms of assembly, homodimer. Part of the ribosomal stalk of the 50S ribosomal subunit. Forms a multimeric L10(L12)X complex, where L10 forms an elongated spine to which 2 to 4 L12 dimers bind in a sequential fashion. Binds GTP-bound translation factors.

Its function is as follows. Forms part of the ribosomal stalk which helps the ribosome interact with GTP-bound translation factors. Is thus essential for accurate translation. In Halalkalibacterium halodurans (strain ATCC BAA-125 / DSM 18197 / FERM 7344 / JCM 9153 / C-125) (Bacillus halodurans), this protein is Large ribosomal subunit protein bL12.